A 760-amino-acid polypeptide reads, in one-letter code: Colleterpenol synthase (760 aa).

The segment at 14–335 (ASSGLRSKFR…YTRRYPSKAD (322 aa)) is terpene cyclase. Asp95 is a Mg(2+) binding site. A DDXXD 1 motif is present at residues 95–99 (DDYYD). The NSE/DTE signature appears at 233–241 (NDLYSWPKE). A prenyltransferase region spans residues 336–759 (LRQPEVEFVD…LELVLRRLWI (424 aa)). Positions 359-400 (EEKVVSESVESLPTTEVEDEFSSSDASPGSVDQAISTPPSTT) are disordered. Over residues 391-400 (QAISTPPSTT) the composition is skewed to polar residues. The isopentenyl diphosphate site is built by Lys477, Arg480, and His509. Mg(2+)-binding residues include Asp516 and Asp520. The DDXXD 2 signature appears at 516 to 520 (DDIED). Position 525 (Arg525) interacts with dimethylallyl diphosphate. Isopentenyl diphosphate is bound at residue Arg526. Positions 605, 606, 643, 650, 660, and 670 each coordinate dimethylallyl diphosphate.

This sequence in the N-terminal section; belongs to the terpene synthase family. In the C-terminal section; belongs to the FPP/GGPP synthase family. In terms of assembly, hexamer. The cofactor is Mg(2+).

It catalyses the reaction 5 isopentenyl diphosphate + dimethylallyl diphosphate = all-trans-hexaprenyl diphosphate + 5 diphosphate. The catalysed reaction is all-trans-hexaprenyl diphosphate + H2O = colleterpenol + diphosphate. In terms of biological role, bifunctional terpene synthase that converts dimethylallyl diphosphate (DMAPP) and isopentenyl diphosphate (IPP) into colleterpenol as a single product. The C-terminal prenyltransferase (PT) domain of CgCS catalyzes formation of hexaprenyl diphosphate (HexPP), whereas the N-terminal terpene cyclase (TC) domain catalyzes the cyclization of HexPP to colleterpenol. The protein is Colleterpenol synthase of Colletotrichum gloeosporioides (Anthracnose fungus).